We begin with the raw amino-acid sequence, 316 residues long: D-alanine--D-alanine ligase (316 aa).

One can recognise an ATP-grasp domain in the interval 108–310 (ERYEELSVVK…FDELVDLIIK (203 aa)). 138 to 193 (EEKIGLPCVVKPRKEGSSIGTHICFSKEELLDALKNEFKNYDEMIVQEYIKGKEIT) is a binding site for ATP. 3 residues coordinate Mg(2+): Asp265, Glu277, and Asn279.

It belongs to the D-alanine--D-alanine ligase family. Requires Mg(2+) as cofactor. Mn(2+) is required as a cofactor.

It localises to the cytoplasm. It catalyses the reaction 2 D-alanine + ATP = D-alanyl-D-alanine + ADP + phosphate + H(+). It participates in cell wall biogenesis; peptidoglycan biosynthesis. In terms of biological role, cell wall formation. In Fervidobacterium nodosum (strain ATCC 35602 / DSM 5306 / Rt17-B1), this protein is D-alanine--D-alanine ligase.